A 343-amino-acid chain; its full sequence is Fructose-1,6-bisphosphatase class 1 (343 aa).

Mg(2+) contacts are provided by E90, D109, L111, and D112. Substrate contacts are provided by residues 112 to 115 (DGSS) and N199. A Mg(2+)-binding site is contributed by E271.

This sequence belongs to the FBPase class 1 family. As to quaternary structure, homotetramer. Mg(2+) is required as a cofactor.

It is found in the cytoplasm. The enzyme catalyses beta-D-fructose 1,6-bisphosphate + H2O = beta-D-fructose 6-phosphate + phosphate. The protein operates within carbohydrate biosynthesis; Calvin cycle. This chain is Fructose-1,6-bisphosphatase class 1, found in Rhodopseudomonas palustris (strain ATCC BAA-98 / CGA009).